We begin with the raw amino-acid sequence, 616 residues long: Electron transfer flavoprotein-ubiquinone oxidoreductase, mitochondrial (616 aa).

The N-terminal 32 residues, 1–32, are a transit peptide targeting the mitochondrion; sequence MLVRLTKLSCPAYQWFHALKIKKCLPLCAPRC. 70–84 is a binding site for FAD; that stretch reads VVIVGAGPAGLSAAI. Lysine 95 bears the N6-acetyllysine mark. Residues 108-129 lie within the membrane without spanning it; the sequence is IGAHTLSGACLDPAAFKELFPD. N6-acetyllysine occurs at positions 131 and 222. Positions 304 and 305 each coordinate a ubiquinone. N6-acetyllysine is present on residues lysine 356 and lysine 415. Residues 427 to 446 lie within the membrane without spanning it; the sequence is AGLHVTEYEDNLKQSWVWKE. Residue serine 550 is modified to Phosphoserine. [4Fe-4S] cluster-binding residues include cysteine 560, cysteine 585, cysteine 588, and cysteine 591. One can recognise a 4Fe-4S ferredoxin-type domain in the interval 576-605; it reads FRLQINAQNCVHCKTCDIKDPSQNINWVVP.

This sequence belongs to the ETF-QO/FixC family. Monomer. [4Fe-4S] cluster is required as a cofactor. FAD serves as cofactor.

It is found in the mitochondrion inner membrane. The enzyme catalyses a ubiquinone + reduced [electron-transfer flavoprotein] = a ubiquinol + oxidized [electron-transfer flavoprotein] + H(+). Its function is as follows. Accepts electrons from ETF and reduces ubiquinone. The chain is Electron transfer flavoprotein-ubiquinone oxidoreductase, mitochondrial (Etfdh) from Rattus norvegicus (Rat).